The primary structure comprises 572 residues: Hsp70-Hsp90 organizing protein 1 (572 aa).

TPR repeat units lie at residues 2–35, 37–69, and 70–103; these read AEEA…APTN, VLFS…KPYW, and PKGY…DPTN. In terms of domain architecture, STI1 1 spans 133-172; that stretch reads GPEMWTKLTSDPSTRGFLQQPDFVNMMQEIQKNPSSLNLY. The residue at position 167 (serine 167) is a Phosphoserine. A disordered region spans residues 189 to 248; sequence KFRPPPPQGDEAEVPESDMGQSSSNEPEVEKKREPEPEPEPEVTEEKEKKERKEKAKKEK. Residues 232-248 are compositionally biased toward basic and acidic residues; that stretch reads TEEKEKKERKEKAKKEK. A Bipartite nuclear localization signal motif is present at residues 241–258; sequence KEKAKKEKELGNAAYKKK. TPR repeat units lie at residues 244-277, 279-311, 319-356, 358-382, 383-416, 418-450, and 451-484; these read AKKE…DDED, SYLT…GREL, ARAL…HRNP, TLKR…DPKL, GDEE…NPND, KAYS…DPTF, and SKGY…DPSN. Residues 521 to 560 enclose the STI1 2 domain; sequence DPEIQNILTDPVMRQVLSDLQENPSAAQKHMQNPMVMNKI.

As to quaternary structure, co-chaperone that forms a complex with HSP70 and HSP90 and preproteins (e.g. chloroplast preproteins). Post-translationally, phosphorylated. In terms of processing, acetylated.

The protein resides in the cytoplasm. It is found in the nucleus. Mediates the association of the molecular chaperones HSP70 and HSP90. Mediates nuclear encoded chloroplast preproteins binding to HSP90 prior to chloroplastic sorting. This is Hsp70-Hsp90 organizing protein 1 (HOP1) from Arabidopsis thaliana (Mouse-ear cress).